Consider the following 1531-residue polypeptide: Protein turtle (1531 aa).

Over 1-858 (MGVCADLGSH…PARVKHKAIT (858 aa)) the chain is Extracellular. Residues 19-44 (QHNTEKSKEQQQQSQPLEIPEQRASK) are disordered. Ig-like C2-type domains lie at 132 to 243 (PEDA…KNGT), 253 to 340 (PRFS…ARVI), 344 to 436 (GAVI…AYLS), 440 to 529 (PAKV…GVMD), and 536 to 624 (PAFT…MAVT). 5 disulfide bridges follow: Cys-150–Cys-227, Cys-275–Cys-324, Cys-366–Cys-419, Cys-462–Cys-513, and Cys-558–Cys-611. Fibronectin type-III domains follow at residues 632–728 (QPHA…TLED) and 760–851 (PPRN…VPAR). The chain crosses the membrane as a helical span at residues 859 to 879 (AGVVGGILFFIVAIILSVCAV). Residues 880 to 1531 (KICNKRKRRK…QAMQQMESVC (652 aa)) lie on the Cytoplasmic side of the membrane. Disordered regions lie at residues 1248-1269 (EETR…VPLQ) and 1318-1395 (NLNL…SYPR). Low complexity predominate over residues 1333–1349 (SPESRSSSSGFGSKNTS). Residues 1380–1389 (QQAQGQTPHG) are compositionally biased toward polar residues.

This sequence belongs to the immunoglobulin superfamily. Turtle family. In terms of assembly, interacts with bdl. In terms of tissue distribution, exclusively expressed in the central nervous system.

The protein resides in the membrane. Functionally, essential protein that plays a role in the establishment of coordinated motor control. In the developing eye, involved in axonal targeting of the R7 photoreceptor. The sequence is that of Protein turtle (tutl) from Drosophila melanogaster (Fruit fly).